Here is a 252-residue protein sequence, read N- to C-terminus: Probable endonuclease 4 (252 aa).

Residues His-56, His-96, Glu-129, Asp-162, His-165, His-191, Asp-204, His-206, and Glu-233 each coordinate Zn(2+).

It belongs to the AP endonuclease 2 family. It depends on Zn(2+) as a cofactor.

The enzyme catalyses Endonucleolytic cleavage to 5'-phosphooligonucleotide end-products.. Functionally, endonuclease IV plays a role in DNA repair. It cleaves phosphodiester bonds at apurinic or apyrimidinic (AP) sites, generating a 3'-hydroxyl group and a 5'-terminal sugar phosphate. This is Probable endonuclease 4 from Mycobacterium marinum (strain ATCC BAA-535 / M).